The following is a 544-amino-acid chain: Aspartokinase 2, chloroplastic (544 aa).

Residues 1 to 84 constitute a chloroplast transit peptide; it reads MASLQLYGVK…SSGTGKELTC (84 aa). ATP is bound by residues Lys-87, Gly-90, and Ser-119. Glu-203 serves as a coordination point for substrate. ACT domains follow at residues 401–479 and 481–544; these read IAST…RRSI and SLIG…ETDP.

This sequence belongs to the aspartokinase family. In terms of tissue distribution, expressed in stems, leaves, floral organs and young seedlings.

The protein localises to the plastid. The protein resides in the chloroplast. The enzyme catalyses L-aspartate + ATP = 4-phospho-L-aspartate + ADP. The protein operates within amino-acid biosynthesis; L-lysine biosynthesis via DAP pathway; (S)-tetrahydrodipicolinate from L-aspartate: step 1/4. It functions in the pathway amino-acid biosynthesis; L-methionine biosynthesis via de novo pathway; L-homoserine from L-aspartate: step 1/3. Its pathway is amino-acid biosynthesis; L-threonine biosynthesis; L-threonine from L-aspartate: step 1/5. With respect to regulation, allosterically inhibited by lysine, but not by S-adenosyl-L-methionine (SAM). K(0.5) for lysine in the presence of physiological concentrations of substrates is 12.5 uM. No inhibition by threonine or leucine and no activation or inhibition by alanine, cysteine, isoleucine, serine, valine, methionine, glutamine, asparagine, glutamic acid or arginine. Involved in the first step of essential amino acids lysine, threonine, methionine and isoleucine synthesis via the aspartate-family pathway. The sequence is that of Aspartokinase 2, chloroplastic (AK2) from Arabidopsis thaliana (Mouse-ear cress).